The primary structure comprises 455 residues: Adhesin YadA (455 aa).

The signal sequence occupies residues 1 to 25; it reads MTKDFKISVSAALISALFSSPYAFA. A surface exposed passenger domain region spans residues 26–363; it reads DDYDGIPNLT…KKAIRESNQY (338 aa). Positions 209–243 form a coiled coil; that stretch reads VNVAQLKKEIEKTQENTNKRSAELLANANAYADNK. An outer membrane translocation of the passenger domain region spans residues 364–402; sequence TDHKFRQLDNRLDKLDTRVDKGLASSAALNSLFQPYGVG. The next 4 membrane-spanning stretches (beta stranded) occupy residues 402–412, 416–427, 434–440, and 444–455; these read GKVNFTAGVGG, SQALAIGSGYRV, KAGVAYA, and DVMYNASFNIEW. Residues 403–455 are translocator domain; that stretch reads KVNFTAGVGGYRSSQALAIGSGYRVNENVALKAGVAYAGSSDVMYNASFNIEW.

It belongs to the autotransporter-2 (AT-2) (TC 1.B.40) family. Homotrimer; in gels migrates as monomers, dimers and homotrimers. Does not form trimers with distantly related EibA from E.coli; coexpression was lethal and one of the genes is eliminated in vivo. If the full translocator domain (368-455) is exchanged with that of EibA ('299-392'), will form heterotrimers with EibA and vice-versa.

The protein resides in the cell surface. It localises to the cell outer membrane. Functionally, collagen-binding outer membrane protein forming a fibrillar matrix on the bacterial cell surface. Promotes initial attachment and invasion of eukaryotic cells. Also protects the bacteria by being responsible for agglutination, serum resistance, complement inactivation and phagocytosis resistance. The chain is Adhesin YadA (yadA) from Yersinia enterocolitica.